The sequence spans 78 residues: Musculoskeletal embryonic nuclear protein 1 (78 aa).

Disordered stretches follow at residues 1–33 (MSQP…QEIK) and 45–78 (QMGS…SVFG). The short motif at 6-14 (PVKKKRPPV) is the Nuclear localization signal element. Residues 64–78 (VFEKSKDEPPKSVFG) show a composition bias toward basic and acidic residues.

It belongs to the MUSTN1 family. As to expression, predominantly expressed in heart and skeletal muscle. Detected in skeletal muscle satellite cells where expression increases with cell proliferation.

It localises to the nucleus. In terms of biological role, promotes the differentiation and proliferation of skeletal muscle satellite cells. The chain is Musculoskeletal embryonic nuclear protein 1 (MUSTN1) from Gallus gallus (Chicken).